The following is a 652-amino-acid chain: Putative glycine--tRNA ligase (652 aa).

Residues 119-145 form a disordered region; the sequence is GDKEARGQNSNDQPEESDDKKKRKKKV. Position 221 (glutamate 221) interacts with glycine. ATP is bound by residues 253-255 and 264-265; these read RNE and RV. Glutamate 272 is a glycine binding site. 380-381 serves as a coordination point for ATP; sequence EC. 499–501 is a binding site for glycine; the sequence is EPS. Position 506 (arginine 506) interacts with ATP.

Belongs to the class-II aminoacyl-tRNA synthetase family. Homodimer.

The protein localises to the cytoplasm. The catalysed reaction is tRNA(Gly) + glycine + ATP = glycyl-tRNA(Gly) + AMP + diphosphate. It catalyses the reaction 2 ATP + H(+) = P(1),P(4)-bis(5'-adenosyl) tetraphosphate + diphosphate. In terms of biological role, catalyzes the ATP-dependent ligation of glycine to the 3'-end of its cognate tRNA, via the formation of an aminoacyl-adenylate intermediate (Gly-AMP). Also produces diadenosine tetraphosphate (Ap4A), a universal pleiotropic signaling molecule needed for cell regulation pathways, by direct condensation of 2 ATPs. Thereby, may play a special role in Ap4A homeostasis. In Schizosaccharomyces pombe (strain 972 / ATCC 24843) (Fission yeast), this protein is Putative glycine--tRNA ligase (grs1).